The sequence spans 502 residues: Maturase K (502 aa).

Belongs to the intron maturase 2 family. MatK subfamily.

It localises to the plastid. The protein resides in the chloroplast. Its function is as follows. Usually encoded in the trnK tRNA gene intron. Probably assists in splicing its own and other chloroplast group II introns. This Ehretia anacua (Sandpaper tree) protein is Maturase K.